The following is a 64-amino-acid chain: Potassium channel toxin kappa-KTx 3.4 (64 aa).

An N-terminal signal peptide occupies residues 1-26; the sequence is MKSTLMTASLLILVLLSIIDYASVYA. Residues 27 to 36 constitute a propeptide that is removed on maturation; sequence EFIDSEISLE. Disulfide bonds link cysteine 43–cysteine 61 and cysteine 47–cysteine 57.

Belongs to the short scorpion toxin superfamily. Potassium channel inhibitor kappa-KTx family. Kappa-KTx 3 subfamily. As to expression, expressed by the venom gland.

The protein localises to the secreted. Potassium channel inhibitor (Kv). The sequence is that of Potassium channel toxin kappa-KTx 3.4 from Heterometrus petersii (Asian forest scorpion).